Here is a 155-residue protein sequence, read N- to C-terminus: NADPH-dependent 7-cyano-7-deazaguanine reductase (155 aa).

Catalysis depends on cysteine 53, which acts as the Thioimide intermediate. The Proton donor role is filled by aspartate 60. Residues 75 to 77 (VES) and 94 to 95 (HE) contribute to the substrate site.

This sequence belongs to the GTP cyclohydrolase I family. QueF type 1 subfamily.

Its subcellular location is the cytoplasm. The enzyme catalyses 7-aminomethyl-7-carbaguanine + 2 NADP(+) = 7-cyano-7-deazaguanine + 2 NADPH + 3 H(+). It participates in tRNA modification; tRNA-queuosine biosynthesis. In terms of biological role, catalyzes the NADPH-dependent reduction of 7-cyano-7-deazaguanine (preQ0) to 7-aminomethyl-7-deazaguanine (preQ1). This is NADPH-dependent 7-cyano-7-deazaguanine reductase from Brucella abortus (strain S19).